We begin with the raw amino-acid sequence, 306 residues long: F-box/LRR-repeat protein At3g26922 (306 aa).

In terms of domain architecture, F-box spans 13 to 73 (EDRISDLPEA…QSEDETYSEI (61 aa)). LRR repeat units follow at residues 67–93 (DETYSEIVCRLLLSNKAPFLESLHLGF), 98–122 (CRSVEVGMWIGIAYARHVRDLVLHV), 138–170 (CETLESLTLRSWVLVDVPSPACLKSLRTLRLEN), 171–196 (VDYKYDDSVYNLLSGCPNLENLVVYR), 215–243 (LTIYDDNDGEYCTGYVINAPSLKYLKIDG), and 263–288 (IMNVSKIINEKLLETLTSVKRLSLAL).

The sequence is that of F-box/LRR-repeat protein At3g26922 from Arabidopsis thaliana (Mouse-ear cress).